The following is a 313-amino-acid chain: MSEVKTQIKPKAIFLMGPTASGKTALAIALRQKLPVDLISVDSALIYRGMDIGTAKPDETEQSLAPHRLIDILDPALPYSAADFRKDALKAMEEITAAGRIPLLVGGTMLYFKALLEGLSPLPSANPEIRAEIEKKAAEQGWEAIHQELASVDPVAAKRIHPNDPQRLSRALEVYLISGKSMTELTQISGEALPYDVYQFAIAPKDRNVLHQRIEARFKQMLTCGFEDEVKSLYQRGDLHEDLPSIRCVGYRQMWSYLSGEIDYDEMVYRGICATRQLAKRQITWLRGWHDVHWLDSEDFEQSLNTVLQVVSA.

17-24 (GPTASGKT) lines the ATP pocket. A substrate-binding site is contributed by 19–24 (TASGKT). 4 interaction with substrate tRNA regions span residues 42–45 (DSAL), 166–170 (QRLSR), 247–252 (RCVGYR), and 280–287 (KRQITWLR).

This sequence belongs to the IPP transferase family. Monomer. Mg(2+) is required as a cofactor.

The enzyme catalyses adenosine(37) in tRNA + dimethylallyl diphosphate = N(6)-dimethylallyladenosine(37) in tRNA + diphosphate. Its function is as follows. Catalyzes the transfer of a dimethylallyl group onto the adenine at position 37 in tRNAs that read codons beginning with uridine, leading to the formation of N6-(dimethylallyl)adenosine (i(6)A). The sequence is that of tRNA dimethylallyltransferase from Proteus mirabilis (strain HI4320).